A 547-amino-acid polypeptide reads, in one-letter code: Oncoprotein-induced transcript 3 protein (547 aa).

Positions 1–19 (MPQLLLLACLLIIVTRVAP) are cleaved as a signal peptide. Asparagine 89 and asparagine 116 each carry an N-linked (GlcNAc...) asparagine glycan. The EGF-like; calcium-binding domain maps to 182–222 (DENECEQNNGGCSEICVNLKNSYRCECGIGRVLRSDGKTCE). 3 disulfides stabilise this stretch: cysteine 186–cysteine 197, cysteine 193–cysteine 206, and cysteine 208–cysteine 221. Residues 267 to 516 (FCKSNTIEVS…SRCAQGCHRR (250 aa)) enclose the ZP domain. Asparagine 299 carries an N-linked (GlcNAc...) asparagine glycan. Positions 520-547 (EASTEGEDASGPRSQMLTGGPISIDWED) are disordered.

The protein localises to the nucleus envelope. Functionally, may be involved in hepatocellular function and development. This chain is Oncoprotein-induced transcript 3 protein (OIT3), found in Bos taurus (Bovine).